Here is a 214-residue protein sequence, read N- to C-terminus: Octanoyltransferase (214 aa).

The region spanning 29 to 214 is the BPL/LPL catalytic domain; sequence STTPDEIWIL…EHLQKQLMPT (186 aa). Residues 69–76, 146–148, and 159–161 each bind substrate; these read RGGEITYH, ALG, and GLA. The Acyl-thioester intermediate role is filled by C177.

Belongs to the LipB family.

The protein localises to the cytoplasm. It carries out the reaction octanoyl-[ACP] + L-lysyl-[protein] = N(6)-octanoyl-L-lysyl-[protein] + holo-[ACP] + H(+). It functions in the pathway protein modification; protein lipoylation via endogenous pathway; protein N(6)-(lipoyl)lysine from octanoyl-[acyl-carrier-protein]: step 1/2. Functionally, catalyzes the transfer of endogenously produced octanoic acid from octanoyl-acyl-carrier-protein onto the lipoyl domains of lipoate-dependent enzymes. Lipoyl-ACP can also act as a substrate although octanoyl-ACP is likely to be the physiological substrate. The protein is Octanoyltransferase of Polynucleobacter asymbioticus (strain DSM 18221 / CIP 109841 / QLW-P1DMWA-1) (Polynucleobacter necessarius subsp. asymbioticus).